Reading from the N-terminus, the 339-residue chain is Ornithine utilization regulator (339 aa).

The HTH araC/xylS-type domain occupies 241-338; sequence TRVRRLLLAR…GKLPSDYREA (98 aa). 2 consecutive DNA-binding regions (H-T-H motif) follow at residues 258-279 and 305-328; these read EQAA…SSLG and LYEI…RKWT.

In terms of biological role, probably activates the ArgJ gene that encodes ornithine acetyltransferase. Binds to its own promoter-operator region. Probably binds ornithine. This chain is Ornithine utilization regulator (oruR), found in Pseudomonas aeruginosa (strain ATCC 15692 / DSM 22644 / CIP 104116 / JCM 14847 / LMG 12228 / 1C / PRS 101 / PAO1).